The primary structure comprises 124 residues: Secreted RxLR effector protein 49 (124 aa).

The N-terminal stretch at 1–22 is a signal peptide; sequence MIRRSPLVAVILFVAITHVVLA. The RxLR motif lies at 57-60; the sequence is RSLR.

The protein belongs to the RxLR effector family.

It localises to the secreted. It is found in the host cytoplasm. The protein localises to the host nucleus. Effector that acts as a broad suppressor of cell death to interrupt plant immunity. Inhibits cell death induced by cell death-inducing proteins, including the PAMP elicitor INF1 from P.infestans. The polypeptide is Secreted RxLR effector protein 49 (Plasmopara viticola (Downy mildew of grapevine)).